A 565-amino-acid polypeptide reads, in one-letter code: Zinc finger protein 512 (565 aa).

The segment at 1-30 (MSSRLGAVPATSGPTTFKQQRSTRIVGAKN) is disordered. A compositionally biased stretch (polar residues) spans 12–23 (SGPTTFKQQRST). Glycyl lysine isopeptide (Lys-Gly) (interchain with G-Cter in SUMO2) cross-links involve residues Lys18 and Lys83. The tract at residues 85–147 (AATSHVEGSG…QARRIRKEPP (63 aa)) is disordered. Residues 118 to 129 (KKHKLYGRKQRP) are compositionally biased toward basic residues. A C2H2-type 1 zinc finger spans residues 196–219 (FTCHHCGKQLRSLAGMKYHVMANH). Residue Lys226 forms a Glycyl lysine isopeptide (Lys-Gly) (interchain with G-Cter in SUMO2) linkage. Residues 286–309 (LKCHHCGKPYRSKAGLAYHLRSEH) form a C2H2-type 2 zinc finger. Lys332 participates in a covalent cross-link: Glycyl lysine isopeptide (Lys-Gly) (interchain with G-Cter in SUMO2). The C2H2-type 3; atypical zinc-finger motif lies at 405-429 (IQCPNQGCEAVYSSVSGLKAHLGSC). The C2H2-type 4 zinc-finger motif lies at 439–462 (YKCLLCQKEFVSESGVKYHINSVH). The span at 484 to 493 (KQRQQEEEKR) shows a compositional bias: basic and acidic residues. The interval 484–565 (KQRQQEEEKR…PKTNHKRGRK (82 aa)) is disordered. The span at 494 to 507 (RQQHRSRRSLRRRQ) shows a compositional bias: basic residues. The segment covering 522–531 (VGKDQRRNEE) has biased composition (basic and acidic residues). Over residues 554–565 (KPPKTNHKRGRK) the composition is skewed to basic residues.

The protein belongs to the krueppel C2H2-type zinc-finger protein family.

The protein resides in the nucleus. May be involved in transcriptional regulation. In Macaca fascicularis (Crab-eating macaque), this protein is Zinc finger protein 512 (ZNF512).